A 140-amino-acid polypeptide reads, in one-letter code: uncharacterized protein (140 aa).

This is an uncharacterized protein from Spirochaeta aurantia.